A 344-amino-acid polypeptide reads, in one-letter code: Protein RecA (344 aa).

65–72 (GPESSGKT) contacts ATP.

This sequence belongs to the RecA family.

It localises to the cytoplasm. Can catalyze the hydrolysis of ATP in the presence of single-stranded DNA, the ATP-dependent uptake of single-stranded DNA by duplex DNA, and the ATP-dependent hybridization of homologous single-stranded DNAs. It interacts with LexA causing its activation and leading to its autocatalytic cleavage. The polypeptide is Protein RecA (Nitratiruptor sp. (strain SB155-2)).